The chain runs to 153 residues: uncharacterized protein (153 aa).

This is an uncharacterized protein from Bacillus subtilis (strain 168).